A 244-amino-acid polypeptide reads, in one-letter code: MKHFTFADNYLRTYIDTVTFGFKFIVHPVNYTDLSISIMIGEQNLFNLVKLIPNVRKLHLYFTDENTKYNLESITKLTKLRVLVVFSQFEKKSRPRLYNIKSLNKLKLDSIVIYDKILDPFNPVYQWPQIRDRKFKLVKSIDIKGPIINYNVNRIRFHNHLFEKYPVCCSNFIVQLINQPDNTQIYQVIYRYQEQYIEDQIYIQTIDKSKFLRFIYGENVLNTEIYYPQCQQDLYIDDIDNNSN.

This chain is Robin, found in Acanthamoeba polyphaga (Amoeba).